The chain runs to 598 residues: Beta-galactosidase (598 aa).

Positions 1-21 (MLRTTLAPLVLALALALPAAA) are cleaved as a signal peptide. E184 functions as the Proton donor in the catalytic mechanism. E260 serves as the catalytic Nucleophile.

This sequence belongs to the glycosyl hydrolase 35 family.

The catalysed reaction is Hydrolysis of terminal non-reducing beta-D-galactose residues in beta-D-galactosides.. Functionally, preferentially hydrolyzes beta(1-&gt;3) galactosyl linkages over beta(1-&gt;4) linkages. The protein is Beta-galactosidase (bga) of Xanthomonas manihotis.